The chain runs to 595 residues: Merlin (595 aa).

At serine 13 the chain carries Phosphoserine. In terms of domain architecture, FERM spans 22–311 (FTVRIVTMDA…GNHDLFMRRR (290 aa)). Serine 518 is modified (phosphoserine; by PAK).

In terms of assembly, interacts with NHERF1, HGS and AGAP2. Interacts with SGSM3. Interacts (via FERM domain) with MPP1. Interacts with LAYN and WWC1. Interacts with the CUL4A-RBX1-DDB1-VprBP/DCAF1 E3 ubiquitin-protein ligase complex. The unphosphorylated form interacts (via FERM domain) with VPRBP/DCAF1. Interacts (via FERM domain) with NOP53; the interaction is direct. Interacts with SCHIP1; the interaction is direct. Phosphorylation of Ser-518 inhibits nuclear localization by disrupting the intramolecular association of the FERM domain with the C-terminal tail. Post-translationally, ubiquitinated by the CUL4A-RBX1-DDB1-DCAF1/VprBP E3 ubiquitin-protein ligase complex for ubiquitination and subsequent proteasome-dependent degradation. In terms of processing, phosphorylation of Ser-518 inhibits nuclear localization by disrupting the intramolecular association of the FERM domain with the C-terminal tail. The dephosphorylation of Ser-518 favors the interaction with NOP53.

Its subcellular location is the cell membrane. It localises to the cell projection. The protein resides in the cytoplasm. It is found in the cytoskeleton. The protein localises to the nucleus. Functionally, probable regulator of the Hippo/SWH (Sav/Wts/Hpo) signaling pathway, a signaling pathway that plays a pivotal role in tumor suppression by restricting proliferation and promoting apoptosis. Along with WWC1 can synergistically induce the phosphorylation of LATS1 and LATS2 and can probably function in the regulation of the Hippo/SWH (Sav/Wts/Hpo) signaling pathway. May act as a membrane stabilizing protein. May inhibit PI3 kinase by binding to AGAP2 and impairing its stimulating activity. Suppresses cell proliferation and tumorigenesis by inhibiting the CUL4A-RBX1-DDB1-VprBP/DCAF1 E3 ubiquitin-protein ligase complex. The protein is Merlin (NF2) of Papio anubis (Olive baboon).